The following is a 725-amino-acid chain: Homeobox-leucine zipper protein HDG3 (725 aa).

Positions 1 to 74 (MSQSNMVPVA…PRHKKKKYNR (74 aa)) are disordered. Positions 11–40 (NNGDNNNDNENNNNNNNNGGTDNTNAGNDS) are enriched in low complexity. Residues 46-64 (DSGNTSSGNHGEGLGNNQA) show a composition bias toward polar residues. Positions 65 to 74 (PRHKKKKYNR) are enriched in basic residues. The segment at residues 68–127 (KKKKYNRHTQLQISEMEAFFRECPHPDDKQRYDLSAQLGLDPVQIKFWFQNKRTQNKNQQ) is a DNA-binding region (homeobox). Positions 117 to 201 (QNKRTQNKNQ…SVTAEKISRL (85 aa)) form a coiled coil. Residues 243 to 475 (DANTKPIIME…LVRQCERISS (233 aa)) form the START domain.

It belongs to the HD-ZIP homeobox family. Class IV subfamily. In terms of assembly, interacts with AIL7/PLT7, ANT, BBM and AIL1. Expressed in siliques.

Its subcellular location is the nucleus. Its function is as follows. Probable transcription factor. Seems to promote cell differentiation. This is Homeobox-leucine zipper protein HDG3 from Arabidopsis thaliana (Mouse-ear cress).